A 251-amino-acid polypeptide reads, in one-letter code: Hydroxyacylglutathione hydrolase (251 aa).

Zn(2+) contacts are provided by His-53, His-55, Asp-57, His-58, His-110, Asp-127, and His-165.

This sequence belongs to the metallo-beta-lactamase superfamily. Glyoxalase II family. As to quaternary structure, monomer. Requires Zn(2+) as cofactor.

The enzyme catalyses an S-(2-hydroxyacyl)glutathione + H2O = a 2-hydroxy carboxylate + glutathione + H(+). The protein operates within secondary metabolite metabolism; methylglyoxal degradation; (R)-lactate from methylglyoxal: step 2/2. Its function is as follows. Thiolesterase that catalyzes the hydrolysis of S-D-lactoyl-glutathione to form glutathione and D-lactic acid. The chain is Hydroxyacylglutathione hydrolase from Salmonella paratyphi C (strain RKS4594).